A 456-amino-acid chain; its full sequence is Proline-specific permease ProY (456 aa).

The Cytoplasmic portion of the chain corresponds to 1-17; that stretch reads MESNNKLKRGLSTRHIR. Transmembrane regions (helical) follow at residues 18–38 and 39–59; these read FMAL…DAIK and MAGP…YIIM. At 60-95 the chain is on the cytoplasmic side; it reads RALGEMSVHNPAASSFSRYAQENLGPLAGYITGWTY. The next 2 helical transmembrane spans lie at 96-116 and 117-137; these read CFEI…YMGV and WFPA…ICAI. Over 138–156 the chain is Cytoplasmic; the sequence is NLMSVKVFGELEFWFSFFK. A helical transmembrane segment spans residues 157-177; that stretch reads VATIIIMIVAGIGIIVWGIGN. Topologically, residues 178 to 197 are periplasmic; that stretch reads GGQPTGIHNLWSNGGFFSNG. The helical transmembrane segment at 198–218 threads the bilayer; that stretch reads WLGMIMSLQMVMFAYGGIEII. Topologically, residues 219 to 242 are cytoplasmic; the sequence is GITAGEAKDPEKSIPRAINSVPMR. A helical transmembrane segment spans residues 243–263; that stretch reads ILVFYVGTLFVIMSIYPWNQV. The Periplasmic segment spans residues 264–277; the sequence is GTNGSPFVLTFQHM. Residues 278-298 traverse the membrane as a helical segment; it reads GITFAASILNFVVLTASLSAI. Residues 299 to 331 lie on the Cytoplasmic side of the membrane; it reads NSDVFGVGRMLHGMAEQGSAPKVFAKTSRRGIP. A helical membrane pass occupies residues 332 to 352; it reads WVTVLVMTIALLFAVYLNYIM. Residues 353–355 are Periplasmic-facing; the sequence is PEN. Residues 356 to 376 form a helical membrane-spanning segment; that stretch reads VFLVIASLATFATVWVWIMIL. Residues 377 to 399 are Cytoplasmic-facing; that stretch reads LSQIAFRRRLPPEEVKALKFKVP. The helical transmembrane segment at 400 to 420 threads the bilayer; that stretch reads GGVVTTIAGLIFLVFIIALIG. At 421–424 the chain is on the periplasmic side; the sequence is YHPD. A helical transmembrane segment spans residues 425–445; it reads TRISLYVGFAWIVLLLIGWIF. The Cytoplasmic segment spans residues 446–456; it reads KRRRDRQLAQA.

The protein belongs to the amino acid-polyamine-organocation (APC) superfamily. Amino acid transporter (AAT) (TC 2.A.3.1) family.

It is found in the cell inner membrane. In terms of biological role, permease that is involved in the transport across the cytoplasmic membrane of proline. This Salmonella typhimurium (strain LT2 / SGSC1412 / ATCC 700720) protein is Proline-specific permease ProY (proY).